A 257-amino-acid polypeptide reads, in one-letter code: Ribonuclease HII (257 aa).

One can recognise an RNase H type-2 domain in the interval 72–257 (TYIAGIDEVG…FAPIKDMIQK (186 aa)). A divalent metal cation-binding residues include Asp78, Glu79, and Asp170.

The protein belongs to the RNase HII family. Mn(2+) serves as cofactor. Requires Mg(2+) as cofactor.

It localises to the cytoplasm. It carries out the reaction Endonucleolytic cleavage to 5'-phosphomonoester.. Endonuclease that specifically degrades the RNA of RNA-DNA hybrids. The protein is Ribonuclease HII of Bacillus cereus (strain ATCC 10987 / NRS 248).